The following is a 29-amino-acid chain: Cytochrome b6-f complex subunit 8 (29 aa).

Residues 3–23 (ITSIAWGALMVVFTFSLSLVV) traverse the membrane as a helical segment.

This sequence belongs to the PetN family. In terms of assembly, the 4 large subunits of the cytochrome b6-f complex are cytochrome b6, subunit IV (17 kDa polypeptide, PetD), cytochrome f and the Rieske protein, while the 4 small subunits are PetG, PetL, PetM and PetN. The complex functions as a dimer.

It localises to the plastid membrane. Its function is as follows. Component of the cytochrome b6-f complex, which mediates electron transfer between photosystem II (PSII) and photosystem I (PSI), cyclic electron flow around PSI, and state transitions. The protein is Cytochrome b6-f complex subunit 8 of Aneura mirabilis (Parasitic liverwort).